The primary structure comprises 178 residues: Large ribosomal subunit protein uL6 (178 aa).

Belongs to the universal ribosomal protein uL6 family. In terms of assembly, part of the 50S ribosomal subunit.

Its function is as follows. This protein binds to the 23S rRNA, and is important in its secondary structure. It is located near the subunit interface in the base of the L7/L12 stalk, and near the tRNA binding site of the peptidyltransferase center. This Coxiella burnetii (strain CbuG_Q212) (Coxiella burnetii (strain Q212)) protein is Large ribosomal subunit protein uL6.